Reading from the N-terminus, the 192-residue chain is ATP synthase protein MI25 (192 aa).

The chain crosses the membrane as a helical span at residues 29–49 (ILIYNEEMIVALCFIGFIIFS).

This sequence belongs to the ATPase protein MI25 family. As to quaternary structure, F-type ATPases have 2 components, CF(1) - the catalytic core - and CF(0) - the membrane proton channel. CF(1) has five subunits: alpha(3), beta(3), gamma(1), delta(1), epsilon(1). CF(0) has three main subunits: a, b and c.

It localises to the mitochondrion membrane. Its function is as follows. This is one of the chains of the nonenzymatic component (CF(0) subunit) of the mitochondrial ATPase complex. This is ATP synthase protein MI25 (ATP4) from Arabidopsis thaliana (Mouse-ear cress).